Consider the following 186-residue polypeptide: Small ribosomal subunit protein uS19 (186 aa).

The interval methionine 1–glutamine 95 is unknown. The tract at residues methionine 96–lysine 186 is small ribosomal subunit protein uS19.

Belongs to the universal ribosomal protein uS19 family.

Its function is as follows. Protein S19 forms a complex with S13 that binds strongly to the 16S ribosomal RNA. The sequence is that of Small ribosomal subunit protein uS19 from Aquifex aeolicus (strain VF5).